The sequence spans 348 residues: Histidinol-phosphate aminotransferase (348 aa).

Lys-211 is modified (N6-(pyridoxal phosphate)lysine).

This sequence belongs to the class-II pyridoxal-phosphate-dependent aminotransferase family. Histidinol-phosphate aminotransferase subfamily. As to quaternary structure, homodimer. It depends on pyridoxal 5'-phosphate as a cofactor.

The catalysed reaction is L-histidinol phosphate + 2-oxoglutarate = 3-(imidazol-4-yl)-2-oxopropyl phosphate + L-glutamate. It functions in the pathway amino-acid biosynthesis; L-histidine biosynthesis; L-histidine from 5-phospho-alpha-D-ribose 1-diphosphate: step 7/9. This Chlorobaculum tepidum (strain ATCC 49652 / DSM 12025 / NBRC 103806 / TLS) (Chlorobium tepidum) protein is Histidinol-phosphate aminotransferase.